Reading from the N-terminus, the 70-residue chain is DNA gyrase inhibitor YacG (70 aa).

Over residues 1 to 15 (MPEDKKAAAKVEPLR) the composition is skewed to basic and acidic residues. The tract at residues 1-22 (MPEDKKAAAKVEPLRKTRPCPE) is disordered. Cysteine 20, cysteine 23, cysteine 35, and cysteine 39 together coordinate Zn(2+).

Belongs to the DNA gyrase inhibitor YacG family. In terms of assembly, interacts with GyrB. It depends on Zn(2+) as a cofactor.

Functionally, inhibits all the catalytic activities of DNA gyrase by preventing its interaction with DNA. Acts by binding directly to the C-terminal domain of GyrB, which probably disrupts DNA binding by the gyrase. The sequence is that of DNA gyrase inhibitor YacG from Rhizobium johnstonii (strain DSM 114642 / LMG 32736 / 3841) (Rhizobium leguminosarum bv. viciae).